The following is a 356-amino-acid chain: Sterol-4-alpha-carboxylate 3-dehydrogenase, decarboxylating (356 aa).

N-acetylmethionine is present on Met1. Catalysis depends on Tyr155, which acts as the Proton acceptor. Lys159 contacts NAD(+). The helical transmembrane segment at 281 to 301 threads the bilayer; sequence WLAYYLALLVSLLVMVISPVI. The Prevents secretion from ER signature appears at 353–356; that stretch reads RKVM.

Belongs to the 3-beta-HSD family. Homodimer.

The protein resides in the endoplasmic reticulum membrane. It localises to the lipid droplet. The enzyme catalyses a 3beta-hydroxysteroid-4alpha-carboxylate + NADP(+) = a 3-oxosteroid + CO2 + NADPH. It catalyses the reaction a 3beta-hydroxysteroid-4alpha-carboxylate + NAD(+) = a 3-oxosteroid + CO2 + NADH. The catalysed reaction is 4alpha-carboxyzymosterol + NADP(+) = zymosterone + CO2 + NADPH. It carries out the reaction 4alpha-carboxy-4beta-methyl-5alpha-cholest-8-en-3beta-ol + NADP(+) = 4alpha-methyl-5alpha-cholest-8-en-3-one + CO2 + NADPH. The enzyme catalyses 4alpha-carboxy-5alpha-cholest-8-ene-3beta-ol + NADP(+) = 5alpha-cholest-8-en-3-one + CO2 + NADPH. It catalyses the reaction 4beta-methylzymosterol-4alpha-carboxylate + NADP(+) = 3-dehydro-4-methylzymosterol + CO2 + NADPH. The catalysed reaction is 4beta-methylzymosterol-4alpha-carboxylate + NAD(+) = 3-dehydro-4-methylzymosterol + CO2 + NADH. It carries out the reaction 4alpha-carboxy-5alpha-cholest-8-ene-3beta-ol + NAD(+) = 5alpha-cholest-8-en-3-one + CO2 + NADH. The enzyme catalyses 4alpha-carboxy-4beta-methyl-5alpha-cholest-8-en-3beta-ol + NAD(+) = 4alpha-methyl-5alpha-cholest-8-en-3-one + CO2 + NADH. It catalyses the reaction 4alpha-carboxyzymosterol + NAD(+) = zymosterone + CO2 + NADH. Its pathway is steroid biosynthesis; zymosterol biosynthesis; zymosterol from lanosterol: step 4/6. Catalyzes the NAD(P)(+)-dependent oxidative decarboxylation of the C4 methyl groups of 4-alpha-carboxysterols in post-squalene cholesterol biosynthesis. Also plays a role in the regulation of the endocytic trafficking of EGFR. The polypeptide is Sterol-4-alpha-carboxylate 3-dehydrogenase, decarboxylating (NSDHL) (Bos taurus (Bovine)).